A 485-amino-acid chain; its full sequence is Pentatricopeptide repeat-containing protein At1g62720 (485 aa).

PPR repeat units lie at residues 68 to 102 (SIVD…GIGH), 103 to 137 (DLYS…GYEP), 138 to 172 (DVVT…GFRP), 173 to 207 (DVVI…GVRA), 208 to 242 (DAVT…DIVP), 243 to 277 (NVIT…CVDP), 278 to 312 (DVFT…GCLP), 313 to 347 (DVVT…GLVG), 348 to 378 (DTIT…MDSR), 380 to 414 (NIRT…EIEL), 415 to 449 (DITT…GLKP), and 450 to 484 (DVVS…GLLP).

Belongs to the PPR family. P subfamily.

This chain is Pentatricopeptide repeat-containing protein At1g62720, found in Arabidopsis thaliana (Mouse-ear cress).